The chain runs to 445 residues: Argininosuccinate synthase (445 aa).

Residues 17 to 25 (AFSGGLDTS) and Ala43 contribute to the ATP site. Residue Tyr99 participates in L-citrulline binding. ATP is bound by residues Gly129 and Thr131. Residues Thr131, Asn135, and Asp136 each coordinate L-aspartate. Asn135 contacts L-citrulline. Residue Asp136 coordinates ATP. Positions 139 and 192 each coordinate L-citrulline. Asp194 contacts ATP. Residues Thr201, Glu203, and Glu280 each contribute to the L-citrulline site.

Belongs to the argininosuccinate synthase family. Type 2 subfamily. Homotetramer.

It is found in the cytoplasm. The enzyme catalyses L-citrulline + L-aspartate + ATP = 2-(N(omega)-L-arginino)succinate + AMP + diphosphate + H(+). Its pathway is amino-acid biosynthesis; L-arginine biosynthesis; L-arginine from L-ornithine and carbamoyl phosphate: step 2/3. The protein is Argininosuccinate synthase of Polaromonas naphthalenivorans (strain CJ2).